The chain runs to 225 residues: Glutathione S-transferase U3 (225 aa).

A GST N-terminal domain is found at Glu6–Pro86. Residues Ser16–Pro17, Val43–Lys44, Lys57–Val58, and Glu70–Ser71 each bind glutathione. Residues Ser91–Ile218 enclose the GST C-terminal domain. Thr152 bears the Phosphothreonine mark.

It belongs to the GST superfamily. Tau family.

It is found in the cytoplasm. The protein resides in the cytosol. It catalyses the reaction RX + glutathione = an S-substituted glutathione + a halide anion + H(+). In terms of biological role, may be involved in the conjugation of reduced glutathione to a wide number of exogenous and endogenous hydrophobic electrophiles and have a detoxification role against certain herbicides. In Arabidopsis thaliana (Mouse-ear cress), this protein is Glutathione S-transferase U3 (GSTU3).